We begin with the raw amino-acid sequence, 416 residues long: uncharacterized protein (416 aa).

Transmembrane regions (helical) follow at residues 5–25, 84–104, 128–148, 160–180, 192–212, 237–257, 263–283, 288–308, and 312–332; these read LFLI…ILSL, ISGL…LKHV, AYVP…LFSI, LAFL…YLLW, VLLF…KFGF, PIYF…PVFL, FDKR…FYSL, LHHY…FYLT, and IKYA…GVYI.

Belongs to the glycosyltransferase 83 family.

The protein localises to the cell membrane. This is an uncharacterized protein from Aquifex aeolicus (strain VF5).